The sequence spans 161 residues: NADH-quinone oxidoreductase subunit I (161 aa).

2 consecutive 4Fe-4S ferredoxin-type domains span residues 52–82 (LRRY…IESS) and 92–121 (TRYD…QGPN). The [4Fe-4S] cluster site is built by Cys-62, Cys-65, Cys-68, Cys-72, Cys-101, Cys-104, Cys-107, and Cys-111.

Belongs to the complex I 23 kDa subunit family. In terms of assembly, NDH-1 is composed of 14 different subunits. Subunits NuoA, H, J, K, L, M, N constitute the membrane sector of the complex. [4Fe-4S] cluster serves as cofactor.

It is found in the cell inner membrane. It catalyses the reaction a quinone + NADH + 5 H(+)(in) = a quinol + NAD(+) + 4 H(+)(out). In terms of biological role, NDH-1 shuttles electrons from NADH, via FMN and iron-sulfur (Fe-S) centers, to quinones in the respiratory chain. The immediate electron acceptor for the enzyme in this species is believed to be ubiquinone. Couples the redox reaction to proton translocation (for every two electrons transferred, four hydrogen ions are translocated across the cytoplasmic membrane), and thus conserves the redox energy in a proton gradient. The protein is NADH-quinone oxidoreductase subunit I of Pelagibacter ubique (strain HTCC1062).